The chain runs to 397 residues: MVGNNTAYNTNAPKSVGPWRSTNKLVKIMNDSFYDLPCPVNLNAWWSFGSMLGLCLVIQLLSGLLLSAHYTAHEDMAFDSVVHIMRNVEKGWMLRNIHANGSSMFFICIYAHIARGLYYGSYLDKTVWYFGVHLFLLTMAEAFLGYTLPWGQMSYWGATVITNMLSVSPVVGESMLRYVWGGWTVCNATLKRFYTLHFLLPFVMVAVVFLHLFFLHEKGSNNPLGIESGTMCVPFHPFYTIKDLFGYVCFSFFFMYLVCVDPELLGNHLNYWPANPMKTPIHVQPEWYFMFAYAILRSIPHKAGGVYVMFLSIVVLYLIPTLHTGKYRSLCFYPLNQVVFWVLVGSFISLTWIGARPVREPYIILGSAFQLFISLVYCWTPFLYGCEMNYLNTLNFV.

The next 4 helical transmembrane spans lie at Phe48 to Ala68, Trp92 to Ile113, Trp128 to Leu148, and Phe193 to Phe213. Residues His98 and His112 each coordinate heme b. Heme b is bound by residues His197 and His211. Position 216 (His216) interacts with a ubiquinone. 4 consecutive transmembrane segments (helical) span residues Ile241–Asp261, Ala303–His323, Leu335–Ala355, and Tyr362–Phe382.

Belongs to the cytochrome b family. As to quaternary structure, the main subunits of complex b-c1 are: cytochrome b, cytochrome c1 and the Rieske protein. Heme b is required as a cofactor.

It is found in the mitochondrion inner membrane. In terms of biological role, component of the ubiquinol-cytochrome c reductase complex (complex III or cytochrome b-c1 complex) that is part of the mitochondrial respiratory chain. The b-c1 complex mediates electron transfer from ubiquinol to cytochrome c. Contributes to the generation of a proton gradient across the mitochondrial membrane that is then used for ATP synthesis. The polypeptide is Cytochrome b (MT-CYB) (Mytilus edulis (Blue mussel)).